A 419-amino-acid chain; its full sequence is Inward rectifier potassium channel 16 (419 aa).

Topologically, residues 1 to 67 (MSYYGSSYRI…MVDIFTTLVD (67 aa)) are cytoplasmic. The helical transmembrane segment at 68–94 (TKWRHMFVIFSLSYILSWLIFGSIFWL) threads the bilayer. The Extracellular portion of the chain corresponds to 95 to 117 (IAFHHGDLLSDPDITPCVDNVHS). The segment at residues 118–134 (FTAAFLFSLETQTTIGY) is an intramembrane region (helical; Pore-forming). Positions 131–136 (TIGYGY) match the Selectivity filter motif. Over 135–143 (GYRCVTEEC) the chain is Extracellular. Residues 144–171 (SVAVLTVILQSILSCIINTFIIGAALAK) form a helical membrane-spanning segment. Over 172–419 (MATARKRAQT…LNRISMESQM (248 aa)) the chain is Cytoplasmic. Phosphoserine occurs at positions 358, 374, and 376.

The protein belongs to the inward rectifier-type potassium channel (TC 1.A.2.1) family. KCNJ16 subfamily. It forms heteromeric channels with Kir4.1/KCNJ10; this interaction is required for KCNJ16 localization to the basolateral membrane in kidney cells. As a heteromer with KCNJ10, may interact with MAGI1; this interaction may facilitate KCNJ10/KCNJ16 potassium channel expression at the basolateral membrane in kidney cells. May form heteromers with Kir2.1/KCNJ2. Can form heteromeric channels with Kir4.2/KCNJ15. In terms of tissue distribution, abundantly expressed in the proximal and distal segments of the nephron.

It is found in the membrane. It localises to the basolateral cell membrane. It carries out the reaction K(+)(in) = K(+)(out). With respect to regulation, channel activity is strongly regulated by variations of cytosolic pH; channels are activated by alkaline and inhibited by acidic pH values. Activated by phosphatidylinositol 4,5 biphosphate (PtdIns(4,5)P2). Functionally, inward rectifier potassium channels are characterized by a greater tendency to allow potassium to flow into the cell rather than out of it. Their voltage dependence is regulated by the concentration of extracellular potassium; as external potassium is raised, the voltage range of the channel opening shifts to more positive voltages. The inward rectification is mainly due to the blockage of outward current by internal magnesium. KCNJ16 may be involved in the regulation of fluid and pH balance. In the kidney, together with KCNJ10, mediates basolateral K(+) recycling in distal tubules; this process is critical for Na(+) reabsorption at the tubules. This Mus musculus (Mouse) protein is Inward rectifier potassium channel 16 (Kcnj16).